We begin with the raw amino-acid sequence, 212 residues long: Proteasome subunit beta (212 aa).

Positions 1–11 (MSQEHQDVKTG) are cleaved as a propeptide — removed in mature form; by autocatalysis. The active-site Nucleophile is the Thr-12.

Belongs to the peptidase T1B family. In terms of assembly, the 20S proteasome core is composed of 14 alpha and 14 beta subunits that assemble into four stacked heptameric rings, resulting in a barrel-shaped structure. The two inner rings, each composed of seven catalytic beta subunits, are sandwiched by two outer rings, each composed of seven alpha subunits. The catalytic chamber with the active sites is on the inside of the barrel. Has a gated structure, the ends of the cylinder being occluded by the N-termini of the alpha-subunits. Is capped at one or both ends by the proteasome regulatory ATPase, PAN.

The protein resides in the cytoplasm. It carries out the reaction Cleavage of peptide bonds with very broad specificity.. Its activity is regulated as follows. The formation of the proteasomal ATPase PAN-20S proteasome complex, via the docking of the C-termini of PAN into the intersubunit pockets in the alpha-rings, triggers opening of the gate for substrate entry. Interconversion between the open-gate and close-gate conformations leads to a dynamic regulation of the 20S proteasome proteolysis activity. In terms of biological role, component of the proteasome core, a large protease complex with broad specificity involved in protein degradation. The sequence is that of Proteasome subunit beta from Methanocorpusculum labreanum (strain ATCC 43576 / DSM 4855 / Z).